The primary structure comprises 199 residues: Ribosome maturation factor RimM (199 aa).

Positions 95–168 constitute a PRC barrel domain; that stretch reads EDEFYHADLV…FVRVDPVAAG (74 aa). The tract at residues 167–199 is disordered; sequence AGLVEDEDGDAPREEDFDPKGRPRGPRDAGGNR. The span at 176–193 shows a compositional bias: basic and acidic residues; sequence DAPREEDFDPKGRPRGPR.

This sequence belongs to the RimM family. In terms of assembly, binds ribosomal protein uS19.

The protein localises to the cytoplasm. In terms of biological role, an accessory protein needed during the final step in the assembly of 30S ribosomal subunit, possibly for assembly of the head region. Essential for efficient processing of 16S rRNA. May be needed both before and after RbfA during the maturation of 16S rRNA. It has affinity for free ribosomal 30S subunits but not for 70S ribosomes. This is Ribosome maturation factor RimM from Mesorhizobium japonicum (strain LMG 29417 / CECT 9101 / MAFF 303099) (Mesorhizobium loti (strain MAFF 303099)).